Here is a 154-residue protein sequence, read N- to C-terminus: uncharacterized protein (154 aa).

One can recognise an HTH marR-type domain in the interval 7–143 (RSELEKTAVQ…IFSFVGKAAD (137 aa)). The H-T-H motif DNA-binding region spans 57–80 (AGELGKKTGLSTGSVTALVDRLEK).

This is an uncharacterized protein from Bacillus subtilis (strain 168).